The chain runs to 802 residues: ATP-dependent zinc metalloprotease FTSH 3, mitochondrial (802 aa).

The transit peptide at 1-21 (MSLSSLSRALARSARSSRQRQ) directs the protein to the mitochondrion. The segment covering 1–23 (MSLSSLSRALARSARSSRQRQGS) has biased composition (low complexity). Disordered regions lie at residues 1–33 (MSLS…GLRA) and 85–120 (DKSK…SGDQ). Over residues 85 to 113 (DKSKKNHGKHSEEENKGKGDESDKSDSKK) the composition is skewed to basic and acidic residues. A helical transmembrane segment spans residues 133 to 153 (MIAPLFLFGLLLLSASASSSE). 360 to 367 (GPPGTGKT) contributes to the ATP binding site. Residue His-585 coordinates Zn(2+). Residue Glu-586 is part of the active site. Residues His-589 and Asp-661 each coordinate Zn(2+). The interval 773–802 (KQGFQDEDSNRNAELSNADGASSLGEAVAS) is disordered.

The protein in the N-terminal section; belongs to the AAA ATPase family. In the C-terminal section; belongs to the peptidase M41 family. The cofactor is Zn(2+).

The protein localises to the mitochondrion inner membrane. Functionally, probable ATP-dependent zinc metallopeptidase. The sequence is that of ATP-dependent zinc metalloprotease FTSH 3, mitochondrial (FTSH3) from Oryza sativa subsp. japonica (Rice).